The chain runs to 3284 residues: Location of vulva defective 1 (3284 aa).

An N-terminal signal peptide occupies residues 1–21 (MKKSNFFVLLLLAISAIQIDG). Disordered stretches follow at residues 226–326 (ESTS…ITST), 350–505 (TTML…GTNP), 623–702 (VASS…ADST), 827–926 (STSE…ASTE), and 1043–1216 (TTTE…SLAT). 2 stretches are compositionally biased toward low complexity: residues 227–326 (STST…ITST) and 350–500 (TTML…TTSS). The segment covering 827-913 (STSEVTSTTS…PSDSSSASDS (87 aa)) has biased composition (low complexity). Polar residues predominate over residues 914–926 (MRTTTVDPDASTE). Residues 1043–1057 (TTTETPPTTVSSSDD) show a composition bias toward low complexity. Gly residues predominate over residues 1060 to 1078 (GKTGGTGATGGTGGTGSGG). Low complexity predominate over residues 1079–1104 (SATTLSTGDAVRSTTSGSGSGQSSTG). Gly residues predominate over residues 1105 to 1127 (SGAGGSGTTASGSGSGGSSGTGS). Positions 1128–1138 (DGVNSGKTTAL) are enriched in polar residues. Positions 1163–1192 (GSGSDSNGSSGVSTKSSSGSDTSGSSDSSG) are enriched in low complexity. Over residues 1197–1216 (FSATAQPSTRTTKTRSSLAT) the composition is skewed to polar residues. In terms of domain architecture, GAIN-B spans 2064-2227 (WNNSLQVEII…SVGAFNPTID (164 aa)). Cys2181 and Cys2209 are joined by a disulfide. The segment at 2181–2227 (CYFYQKTSDVFNSEGMYPSDGQGMQFVNCSTDHLTMFSVGAFNPTID) is GPS. Residues 2245 to 2265 (VMIAAVFMLVVYGCLTINAII) form a helical membrane-spanning segment. Residues 2288–2411 (YMYVIAVETG…GDGETERLAR (124 aa)) form the PLAT domain. The next 10 membrane-spanning stretches (helical) occupy residues 2453 to 2473 (DYSVSIIFSLVVVSMISITIL), 2496 to 2516 (IAFGVGFGVLITFLNSLHILL), 2557 to 2577 (IIVFPVLMGLIYISGAGMSLM), 2592 to 2612 (LILWAVVFEPIKGLIWAFLIL), 2672 to 2692 (LFITIRDMLCFFASLYIMVML), 2945 to 2965 (MLYIFFSVLIFVKEIVFYLYG), 2994 to 3014 (WNFMDLIVGALAVASVLAYTI), 3043 to 3063 (WEIVFSYCLAGAVFFTSCKMI), 3089 to 3109 (FGIAFLFFSMTFNSVLYAVLG), and 3144 to 3164 (FAFVVIMLYMIAGSKLVLQLY).

Belongs to the polycystin family. Interacts (via PLAT domain) with atp-2 (via N-terminus) and with kin-10 (via C-terminus). Interacts (via C-terminus) with isoform a of stam-1/pqn-19 (via C-terminus). Autoproteolytically processed at the GPS region of the GAIN-B domain; this cleavage modulates receptor activity. Exclusively expressed in a subset of three categories of adult male sensory neurons: ray neurons, hook neurons and head cephalic (CEM) neurons.

The protein resides in the membrane. It is found in the cell projection. The protein localises to the cilium. Required for two aspects of male mating behavior: response to hermaphrodite contact and vulva location. Acts in the same pathway as pkd-2 and atp-2 in response behavior. May be required for ciliary targeting of pkd-2. In Caenorhabditis elegans, this protein is Location of vulva defective 1 (lov-1).